Here is a 399-residue protein sequence, read N- to C-terminus: Acetate kinase (399 aa).

N7 is a binding site for Mg(2+). Position 14 (K14) interacts with ATP. Residue R89 participates in substrate binding. D146 serves as the catalytic Proton donor/acceptor. ATP is bound by residues H206–G210, D280–R282, and G328–N332. Position 382 (E382) interacts with Mg(2+).

The protein belongs to the acetokinase family. Homodimer. The cofactor is Mg(2+). Mn(2+) is required as a cofactor.

The protein resides in the cytoplasm. It catalyses the reaction acetate + ATP = acetyl phosphate + ADP. Its pathway is metabolic intermediate biosynthesis; acetyl-CoA biosynthesis; acetyl-CoA from acetate: step 1/2. In terms of biological role, catalyzes the formation of acetyl phosphate from acetate and ATP. Can also catalyze the reverse reaction. This chain is Acetate kinase, found in Campylobacter hominis (strain ATCC BAA-381 / DSM 21671 / CCUG 45161 / LMG 19568 / NCTC 13146 / CH001A).